The following is a 301-amino-acid chain: Porphobilinogen deaminase (301 aa).

The residue at position 235 (C235) is an S-(dipyrrolylmethanemethyl)cysteine.

Belongs to the HMBS family. Monomer. Dipyrromethane is required as a cofactor.

It carries out the reaction 4 porphobilinogen + H2O = hydroxymethylbilane + 4 NH4(+). It functions in the pathway porphyrin-containing compound metabolism; protoporphyrin-IX biosynthesis; coproporphyrinogen-III from 5-aminolevulinate: step 2/4. Its function is as follows. Tetrapolymerization of the monopyrrole PBG into the hydroxymethylbilane pre-uroporphyrinogen in several discrete steps. This is Porphobilinogen deaminase from Thermus thermophilus (strain ATCC BAA-163 / DSM 7039 / HB27).